Consider the following 158-residue polypeptide: Eukaryotic translation initiation factor 5A-1 (158 aa).

Residues 1-10 (MSDEEHHFES) are compositionally biased toward basic and acidic residues. The interval 1 to 21 (MSDEEHHFESSDAGASKTYPQ) is disordered. Serine 2 carries the phosphoserine modification. Position 51 is a hypusine (lysine 51).

This sequence belongs to the eIF-5A family. Lys-51 undergoes hypusination, a unique post-translational modification that consists in the addition of a butylamino group from spermidine to lysine side chain, leading to the formation of the unusual amino acid hypusine. eIF-5As are the only known proteins to undergo this modification, which is essential for their function. As to expression, expressed in leaf vasculature and inflorescence stems. Present in xylem tissue but not in phloem, and in developing vessel members, but not in mature vessels members. Detected in anthers.

Functionally, translation factor that promotes translation elongation and termination, particularly upon ribosome stalling at specific amino acid sequence contexts. Binds between the exit (E) and peptidyl (P) site of the ribosome and promotes rescue of stalled ribosome: specifically required for efficient translation of polyproline-containing peptides as well as other motifs that stall the ribosome. Acts as a ribosome quality control (RQC) cofactor by joining the RQC complex to facilitate peptidyl transfer during CAT tailing step. Involved in xylogenesis. The chain is Eukaryotic translation initiation factor 5A-1 (ELF5A-1) from Arabidopsis thaliana (Mouse-ear cress).